Reading from the N-terminus, the 182-residue chain is NADH-ubiquinone oxidoreductase 20 kDa subunit (182 aa).

4 residues coordinate [4Fe-4S] cluster: Cys57, Cys58, Cys122, and Cys152.

This sequence belongs to the complex I 20 kDa subunit family. [4Fe-4S] cluster serves as cofactor.

The protein resides in the mitochondrion. It catalyses the reaction a ubiquinone + NADH + 5 H(+)(in) = a ubiquinol + NAD(+) + 4 H(+)(out). The polypeptide is NADH-ubiquinone oxidoreductase 20 kDa subunit (NAD10) (Reclinomonas americana).